The sequence spans 95 residues: Beta-defensin 132 (95 aa).

The N-terminal stretch at 1–22 (MKFLLLVLAALGFLTQVIPASA) is a signal peptide. 3 disulfide bridges follow: cysteine 27-cysteine 55, cysteine 35-cysteine 49, and cysteine 39-cysteine 56. A disordered region spans residues 74–95 (HWQSRRRNTQRKDKKQQTTVTS). Residues 76–87 (QSRRRNTQRKDK) show a composition bias toward basic residues.

It belongs to the beta-defensin family.

Its subcellular location is the secreted. In terms of biological role, has antibacterial activity. This Homo sapiens (Human) protein is Beta-defensin 132 (DEFB132).